A 28-amino-acid chain; its full sequence is MIINHNMSAMFAQRTLGVTNNAIGKDME.

The protein belongs to the bacterial flagellin family. As to quaternary structure, the flagellum consists of an outer layer composed of repeating units of FlaA around a core that contains several antigenically related polypeptides.

It is found in the periplasmic flagellum. The protein resides in the periplasm. Functionally, component of the core of the flagella. In Treponema phagedenis, this protein is Flagellar filament 34 kDa core protein.